Reading from the N-terminus, the 155-residue chain is Small ribosomal subunit protein mS86 (155 aa).

The transit peptide at 1-27 directs the protein to the mitochondrion; it reads MHYMGLFSRAGNIFRQPRALQASNAML. Positions 36–114 constitute an RRM domain; the sequence is SKIFVGGLSP…RIIGVHPADS (79 aa).

Belongs to the GR-RBP family. As to quaternary structure, component of the mitochondrial ribosome small subunit.

Its subcellular location is the mitochondrion. Its function is as follows. Possibly has a role in RNA transcription or processing during stress. In Arabidopsis thaliana (Mouse-ear cress), this protein is Small ribosomal subunit protein mS86 (RBG6).